Here is a 238-residue protein sequence, read N- to C-terminus: Expansin-like protein 5 (238 aa).

Positions 1–21 are cleaved as a signal peptide; the sequence is MRINFKLILIILTSFYGIINC. One can recognise an Expansin-like EG45 domain in the interval 45–145; sequence NGNCGFGKLT…VKVPCRVSGN (101 aa). 2 disulfides stabilise this stretch: C48–C78 and C81–C140. The N-linked (GlcNAc...) asparagine glycan is linked to N89.

It belongs to the expansin family. Expansin A subfamily.

Its subcellular location is the secreted. In terms of biological role, may serve to lubricate the movement of the cellulose microfibrils during cell growth and wall extension and/or may serve to maintain the fluid state of the slug cell wall. The protein is Expansin-like protein 5 (expl5) of Dictyostelium discoideum (Social amoeba).